The chain runs to 483 residues: Acetyl-coenzyme A carboxylase carboxyl transferase subunit beta, chloroplastic (483 aa).

The 263-residue stretch at 221 to 483 (LWVQCENCYG…FQFHGFFPRP (263 aa)) folds into the CoA carboxyltransferase N-terminal domain. Zn(2+) contacts are provided by cysteine 225, cysteine 228, cysteine 244, and cysteine 247. The C4-type zinc-finger motif lies at 225-247 (CENCYGLNYKKFFSSKMNICEQC).

The protein belongs to the AccD/PCCB family. Acetyl-CoA carboxylase is a heterohexamer composed of biotin carboxyl carrier protein, biotin carboxylase and 2 subunits each of ACCase subunit alpha and ACCase plastid-coded subunit beta (accD). Zn(2+) is required as a cofactor.

It localises to the plastid. It is found in the chloroplast stroma. The enzyme catalyses N(6)-carboxybiotinyl-L-lysyl-[protein] + acetyl-CoA = N(6)-biotinyl-L-lysyl-[protein] + malonyl-CoA. It functions in the pathway lipid metabolism; malonyl-CoA biosynthesis; malonyl-CoA from acetyl-CoA: step 1/1. Its function is as follows. Component of the acetyl coenzyme A carboxylase (ACC) complex. Biotin carboxylase (BC) catalyzes the carboxylation of biotin on its carrier protein (BCCP) and then the CO(2) group is transferred by the transcarboxylase to acetyl-CoA to form malonyl-CoA. This Nuphar advena (Common spatterdock) protein is Acetyl-coenzyme A carboxylase carboxyl transferase subunit beta, chloroplastic.